The sequence spans 223 residues: Deoxyribose-phosphate aldolase (223 aa).

The Proton donor/acceptor role is filled by Asp91. Catalysis depends on Lys154, which acts as the Schiff-base intermediate with acetaldehyde. Catalysis depends on Lys183, which acts as the Proton donor/acceptor.

It belongs to the DeoC/FbaB aldolase family. DeoC type 1 subfamily.

It is found in the cytoplasm. It carries out the reaction 2-deoxy-D-ribose 5-phosphate = D-glyceraldehyde 3-phosphate + acetaldehyde. It functions in the pathway carbohydrate degradation; 2-deoxy-D-ribose 1-phosphate degradation; D-glyceraldehyde 3-phosphate and acetaldehyde from 2-deoxy-alpha-D-ribose 1-phosphate: step 2/2. Its function is as follows. Catalyzes a reversible aldol reaction between acetaldehyde and D-glyceraldehyde 3-phosphate to generate 2-deoxy-D-ribose 5-phosphate. The chain is Deoxyribose-phosphate aldolase from Lysinibacillus sphaericus (strain C3-41).